The sequence spans 295 residues: Maintenance of mitochondrial morphology protein 1 (295 aa).

Over 1-12 the chain is Lumenal; that stretch reads MVQLFHLTFTQG. The helical transmembrane segment at 13–33 threads the bilayer; sequence FFIGQLSVIVIVYIFLRFFLF. At 34 to 295 the chain is on the cytoplasmic side; the sequence is CTKEELKNVQ…REGHRQKSTE (262 aa). One can recognise an SMP-LTD domain in the interval 81–278; the sequence is EEESLDWFNV…SPQFQQISIP (198 aa).

The protein belongs to the MMM1 family. Homodimer. Component of the ER-mitochondria encounter structure (ERMES) or MDM complex, composed of mmm1, mdm10, mdm12 and mdm34. A mmm1 homodimer associates with one molecule of mdm12 on each side in a pairwise head-to-tail manner, and the SMP-LTD domains of mmm1 and mdm12 generate a continuous hydrophobic tunnel for phospholipid trafficking.

It is found in the endoplasmic reticulum membrane. In terms of biological role, component of the ERMES/MDM complex, which serves as a molecular tether to connect the endoplasmic reticulum (ER) and mitochondria. Components of this complex are involved in the control of mitochondrial shape and protein biogenesis, and function in nonvesicular lipid trafficking between the ER and mitochondria. The mdm12-mmm1 subcomplex functions in the major beta-barrel assembly pathway that is responsible for biogenesis of all outer membrane beta-barrel proteins, and acts in a late step after the SAM complex. The mdm10-mdm12-mmm1 subcomplex further acts in the TOM40-specific pathway after the action of the mdm12-mmm1 complex. Essential for establishing and maintaining the structure of mitochondria and maintenance of mtDNA nucleoids. This chain is Maintenance of mitochondrial morphology protein 1, found in Schizosaccharomyces japonicus (strain yFS275 / FY16936) (Fission yeast).